The sequence spans 43 residues: Photosystem II reaction center protein Psb30 (43 aa).

The helical transmembrane segment at Val15–Leu35 threads the bilayer.

It belongs to the Psb30/Ycf12 family. As to quaternary structure, PSII is composed of 1 copy each of membrane proteins PsbA, PsbB, PsbC, PsbD, PsbE, PsbF, PsbH, PsbI, PsbJ, PsbK, PsbL, PsbM, PsbT, PsbX, PsbY, PsbZ, Psb30/Ycf12, peripheral proteins PsbO, CyanoQ (PsbQ), PsbU, PsbV and a large number of cofactors. It forms dimeric complexes.

The protein resides in the cellular thylakoid membrane. In terms of biological role, a core subunit of photosystem II (PSII), probably helps stabilize the reaction center. The polypeptide is Photosystem II reaction center protein Psb30 (Picosynechococcus sp. (strain ATCC 27264 / PCC 7002 / PR-6) (Agmenellum quadruplicatum)).